The following is a 524-amino-acid chain: Probable malate:quinone oxidoreductase (524 aa).

It belongs to the MQO family. Requires FAD as cofactor.

The enzyme catalyses (S)-malate + a quinone = a quinol + oxaloacetate. It participates in carbohydrate metabolism; tricarboxylic acid cycle; oxaloacetate from (S)-malate (quinone route): step 1/1. This Blochmanniella floridana protein is Probable malate:quinone oxidoreductase.